We begin with the raw amino-acid sequence, 428 residues long: Phosphomethylpyrimidine synthase 2 (428 aa).

Residues Met94, Tyr123, His162, 184 to 186 (SRG), 225 to 228 (NGMR), and Glu264 each bind substrate. Zn(2+) is bound at residue His268. Residue Tyr291 coordinates substrate. His332 provides a ligand contact to Zn(2+). Residues Cys408, Cys411, and Cys415 each contribute to the [4Fe-4S] cluster site.

This sequence belongs to the ThiC family. [4Fe-4S] cluster is required as a cofactor.

It catalyses the reaction 5-amino-1-(5-phospho-beta-D-ribosyl)imidazole + S-adenosyl-L-methionine = 4-amino-2-methyl-5-(phosphooxymethyl)pyrimidine + CO + 5'-deoxyadenosine + formate + L-methionine + 3 H(+). Its pathway is cofactor biosynthesis; thiamine diphosphate biosynthesis. Functionally, catalyzes the synthesis of the hydroxymethylpyrimidine phosphate (HMP-P) moiety of thiamine from aminoimidazole ribotide (AIR) in a radical S-adenosyl-L-methionine (SAM)-dependent reaction. The protein is Phosphomethylpyrimidine synthase 2 of Methanosarcina acetivorans (strain ATCC 35395 / DSM 2834 / JCM 12185 / C2A).